The following is a 228-amino-acid chain: MYRYTWLLWWITILLRIQQFYQWWKPDTTSCIQKTGYEGQNLSLPPSNALSSKDYTFSWYKDSLKALNMLCYYTEKLEEIDSKPDTIRRCFLNHTLFLINLTSHYSGIYYFDSLYTYGWVLRTPLCYNVTVYSIYQTHIHTTILLYPPTSTYNSLTISSFTSTNLTHTAVHYAAGNVEAQHDTATPHTMWIIPLVIVTTIIVLICFKFPQKAWNKFTQYRYNSMLTAA.

Residues 1 to 19 (MYRYTWLLWWITILLRIQQ) form the signal peptide. N-linked (GlcNAc...) asparagine; by host glycosylation is found at Asn41, Asn93, Asn100, Asn128, and Asn164. The chain crosses the membrane as a helical span at residues 189-209 (MWIIPLVIVTTIIVLICFKFP).

Belongs to the HHV-5 UL9 family.

It localises to the host membrane. This is an uncharacterized protein from Homo sapiens (Human).